The primary structure comprises 123 residues: Ribonuclease P protein component 1 (123 aa).

The interval 73–93 (PDNGVGTAFKPAGGETRQTTG) is disordered.

It belongs to the eukaryotic/archaeal RNase P protein component 1 family. Consists of a catalytic RNA component and at least 4-5 protein subunits.

The protein resides in the cytoplasm. The enzyme catalyses Endonucleolytic cleavage of RNA, removing 5'-extranucleotides from tRNA precursor.. Part of ribonuclease P, a protein complex that generates mature tRNA molecules by cleaving their 5'-ends. The polypeptide is Ribonuclease P protein component 1 (Halobacterium salinarum (strain ATCC 29341 / DSM 671 / R1)).